A 223-amino-acid polypeptide reads, in one-letter code: GRF1-interacting factor 3 (223 aa).

A disordered region spans residues 179–223 (ANNAGPNDASGGGKPDGTNMSQSGADGQGGSAARHGGGDAKTEGK). A compositionally biased stretch (basic and acidic residues) spans 214–223 (GGGDAKTEGK).

This sequence belongs to the SS18 family. In terms of assembly, interacts with GRF1. Predominantly expressed in shoot tips containing the shoot apical meristem (SAM) and flower buds. Also expressed in mature flowers.

Transcription coactivator that plays a role in the regulation of cell expansion in leaf and cotyledons tissues. Component of a network formed by miR396, the GRFs and their interacting factors (GIFs) acting in the regulation of meristem function, at least partially through the control of cell proliferation. GIFs are involved in the positive regulation of cell proliferation of lateral organs in a functionally redundant manner. In Arabidopsis thaliana (Mouse-ear cress), this protein is GRF1-interacting factor 3 (GIF3).